Reading from the N-terminus, the 378-residue chain is Putative methyltransferase spot-1 (378 aa).

This sequence belongs to the class IV-like SAM-binding methyltransferase superfamily.

Its subcellular location is the cytoplasm. The protein localises to the cytoskeleton. It localises to the spindle. It is found in the chromosome. The protein resides in the centromere. Its subcellular location is the kinetochore. The protein localises to the microtubule organizing center. It localises to the centrosome. In terms of biological role, required for association of the centrosomes with the poles of the bipolar mitotic spindle during metaphase. This Caenorhabditis elegans protein is Putative methyltransferase spot-1.